The sequence spans 334 residues: Aspartate carbamoyltransferase catalytic subunit (334 aa).

Carbamoyl phosphate is bound by residues R70 and T71. K98 serves as a coordination point for L-aspartate. The carbamoyl phosphate site is built by R120, H150, and Q153. The L-aspartate site is built by R183 and R239. Residues G280 and P281 each contribute to the carbamoyl phosphate site.

It belongs to the aspartate/ornithine carbamoyltransferase superfamily. ATCase family. As to quaternary structure, heterododecamer (2C3:3R2) of six catalytic PyrB chains organized as two trimers (C3), and six regulatory PyrI chains organized as three dimers (R2).

The catalysed reaction is carbamoyl phosphate + L-aspartate = N-carbamoyl-L-aspartate + phosphate + H(+). It participates in pyrimidine metabolism; UMP biosynthesis via de novo pathway; (S)-dihydroorotate from bicarbonate: step 2/3. Functionally, catalyzes the condensation of carbamoyl phosphate and aspartate to form carbamoyl aspartate and inorganic phosphate, the committed step in the de novo pyrimidine nucleotide biosynthesis pathway. The chain is Aspartate carbamoyltransferase catalytic subunit from Pseudomonas paraeruginosa (strain DSM 24068 / PA7) (Pseudomonas aeruginosa (strain PA7)).